The sequence spans 235 residues: Transcription factor MYB59 (235 aa).

HTH myb-type domains are found at residues 5–57 (QEEY…VNYL) and 58–112 (HPGL…RKKA). Residues 33–57 (WDFVAKVSGLNRTGKSCRLRWVNYL) constitute a DNA-binding region (H-T-H motif). The Bipartite nuclear localization signal 1 signature appears at 62 to 65 (KRGK). A DNA-binding region (H-T-H motif) is located at residues 85-108 (WSKIARKLPGRTDNEIKNYWRTHM). A Bipartite nuclear localization signal 2 motif is present at residues 109-117 (RKKAQEKKR). The tract at residues 109-147 (RKKAQEKKRPMSPTSSSSNCCSSSMTTTTSQDTGGSNGK) is disordered. The segment covering 119-138 (MSPTSSSSNCCSSSMTTTTS) has biased composition (low complexity).

As to expression, mainly expressed in leaves and seedlings, and to a lower extent, in roots, stems and inflorescences. Isoform MYB59-1 and isoform MYB59-2 are present in roots, leaves, and seedlings, while the expression of isoform MYB59-3 and isoform MYB59-4 is confined to seedlings.

Its subcellular location is the nucleus. Its function is as follows. Transcription factor. This Arabidopsis thaliana (Mouse-ear cress) protein is Transcription factor MYB59 (MYB59).